The following is a 614-amino-acid chain: Phosphomethylpyrimidine synthase (614 aa).

Substrate-binding positions include N230, M259, Y288, H324, 344–346, 385–388, and E424; these read SRG and DGLR. H428 contacts Zn(2+). Y451 is a substrate binding site. Residue H492 coordinates Zn(2+). The [4Fe-4S] cluster site is built by C572, C575, and C580.

Belongs to the ThiC family. As to quaternary structure, homodimer. It depends on [4Fe-4S] cluster as a cofactor.

The enzyme catalyses 5-amino-1-(5-phospho-beta-D-ribosyl)imidazole + S-adenosyl-L-methionine = 4-amino-2-methyl-5-(phosphooxymethyl)pyrimidine + CO + 5'-deoxyadenosine + formate + L-methionine + 3 H(+). It participates in cofactor biosynthesis; thiamine diphosphate biosynthesis. Its function is as follows. Catalyzes the synthesis of the hydroxymethylpyrimidine phosphate (HMP-P) moiety of thiamine from aminoimidazole ribotide (AIR) in a radical S-adenosyl-L-methionine (SAM)-dependent reaction. In Stenotrophomonas maltophilia (strain K279a), this protein is Phosphomethylpyrimidine synthase.